Consider the following 254-residue polypeptide: MQRPGEPGAARFGPPEGCADHRPHRYRSFMIEEILTEPPGPKGAAPAAAAAAAGELLKFGVQALLAARPFHSHLAVLKAEQAAVFKFPLAPLGCSGLSSALLAAGPGLPGAAGAPHLPLELQLRGKLEAAGPGEPGTKAKKGRRSRTVFTELQLMGLEKRFEKQKYLSTPDRIDLAESLGLSQLQVKTWYQNRRMKWKKIVLQGGGLESPTKPKGRPKKNSIPTSEQLTEQERAKDAEKPAEVPGEPSDRSRED.

Positions 1 to 20 (MQRPGEPGAARFGPPEGCAD) are disordered. Positions 142 to 201 (GRRSRTVFTELQLMGLEKRFEKQKYLSTPDRIDLAESLGLSQLQVKTWYQNRRMKWKKIV) form a DNA-binding region, homeobox. Positions 204–254 (GGGLESPTKPKGRPKKNSIPTSEQLTEQERAKDAEKPAEVPGEPSDRSRED) are disordered. Residues 230 to 254 (EQERAKDAEKPAEVPGEPSDRSRED) are compositionally biased toward basic and acidic residues.

The protein belongs to the BAR homeobox family. Widely expressed. Expressed at higher levels in testis and heart. Detected in craniofacial tissue and adult iris, but not in lymphocytes, fibroblasts, choroid retina, retinal pigment epithelium, kidney, or fetal liver.

It localises to the nucleus. Transcription factor, which is involved in craniofacial development, in odontogenesis and in stomach organogenesis. May have a role in the differentiation of molars from incisors. Plays a role in suppressing endodermal Wnt activity. Binds to a regulatory module of the NCAM promoter. This Homo sapiens (Human) protein is Homeobox protein BarH-like 1 (BARX1).